The chain runs to 336 residues: Fructose-1,6-bisphosphatase class 1 (336 aa).

Mg(2+) contacts are provided by glutamate 90, aspartate 112, leucine 114, and aspartate 115. Residues 115 to 118 (DGSS), asparagine 211, and lysine 277 each bind substrate. A Mg(2+)-binding site is contributed by glutamate 283.

It belongs to the FBPase class 1 family. In terms of assembly, homotetramer. Mg(2+) is required as a cofactor.

It is found in the cytoplasm. The catalysed reaction is beta-D-fructose 1,6-bisphosphate + H2O = beta-D-fructose 6-phosphate + phosphate. The protein operates within carbohydrate biosynthesis; gluconeogenesis. The protein is Fructose-1,6-bisphosphatase class 1 of Pseudomonas putida (strain GB-1).